Here is a 165-residue protein sequence, read N- to C-terminus: Large ribosomal subunit protein bL17 (165 aa).

Residues 138 to 158 (QEKREAQEKAREEKRTARKSD) are compositionally biased toward basic and acidic residues. Positions 138–165 (QEKREAQEKAREEKRTARKSDSVPARKK) are disordered.

This sequence belongs to the bacterial ribosomal protein bL17 family. Part of the 50S ribosomal subunit. Contacts protein L32.

This Leptospira borgpetersenii serovar Hardjo-bovis (strain JB197) protein is Large ribosomal subunit protein bL17.